A 293-amino-acid chain; its full sequence is PHD finger protein 11A (293 aa).

The C2HC pre-PHD-type zinc-finger motif lies at 25–61 (KRTCALCPEGHEWSQIYFSPSANIVAHENCLLYSSGL). The PHD-type; degenerate zinc finger occupies 91 to 143 (LKCSFCKNKGATMGYDLQSCTKNYHLSCAMEDHAILQVDEDHGTYKLFCQKHA). A disordered region spans residues 262–293 (SSSTSGSLLPPEDHQVRCQESPEVQAGSGDSL).

The protein localises to the nucleus. The polypeptide is PHD finger protein 11A (Phf11a) (Mus musculus (Mouse)).